We begin with the raw amino-acid sequence, 89 residues long: MKPMYRSRSWRRKYVRTPGGRVVIHFERKKPKIAHCAMCGRPLNGIPRGRPVEMRKLPKTKKRPERPMPHLCPRCMRKVMKEQIRAQLS.

The segment at 45–71 is disordered; it reads GIPRGRPVEMRKLPKTKKRPERPMPHL.

This sequence belongs to the eukaryotic ribosomal protein eL34 family. Part of the 50S ribosomal subunit.

The polypeptide is Large ribosomal subunit protein eL34 (Pyrococcus furiosus (strain ATCC 43587 / DSM 3638 / JCM 8422 / Vc1)).